Here is a 378-residue protein sequence, read N- to C-terminus: Peptide chain release factor RF2 (378 aa).

An N5-methylglutamine modification is found at Q253.

It belongs to the prokaryotic/mitochondrial release factor family. Interacts with the ribosome. Interacts with ribosomal protein L11. Recruited to stalled E.coli ribosomes by E.coli ArfA.

Its subcellular location is the cytoplasm. Peptide chain release factor 2 directs the termination of translation in response to the peptide chain termination codons UGA and UAA. In endogenous ribosomes interacts with P-site tRNA and 23S rRNA. In the presence of truncated mRNA in the 70S ribosome, ArfA and RF2 interact such that the GGQ peptide hydrolysis motif of RF2 rises into the peptidyl-transferase center and releases the ribosome. Recruited to stalled E.coli 70S ribosomes by E.coli ArfA, but cannot be functionally accomodated in the peptidyl-transferase center. Note T.thermophilus probably does not encode arfA. The protein is Peptide chain release factor RF2 (prfB) of Thermus thermophilus (strain ATCC 27634 / DSM 579 / HB8).